The following is a 245-amino-acid chain: NAD-dependent protein deacylase (245 aa).

The Deacetylase sirtuin-type domain occupies 1–237 (MNFPYRNIVV…PKLVEELLAH (237 aa)). An NAD(+)-binding site is contributed by 13–32 (GAGISAESGIQTFRAQDGLW). Substrate-binding residues include tyrosine 57 and arginine 60. An NAD(+)-binding site is contributed by 94 to 97 (QNID). The active-site Proton acceptor is histidine 112. Zn(2+) contacts are provided by cysteine 120 and cysteine 139. NAD(+)-binding positions include 179 to 181 (GTS), 205 to 207 (NLE), and alanine 223.

The protein belongs to the sirtuin family. Class III subfamily. Requires Zn(2+) as cofactor.

It localises to the cytoplasm. It carries out the reaction N(6)-acetyl-L-lysyl-[protein] + NAD(+) + H2O = 2''-O-acetyl-ADP-D-ribose + nicotinamide + L-lysyl-[protein]. It catalyses the reaction N(6)-succinyl-L-lysyl-[protein] + NAD(+) + H2O = 2''-O-succinyl-ADP-D-ribose + nicotinamide + L-lysyl-[protein]. Functionally, NAD-dependent lysine deacetylase and desuccinylase that specifically removes acetyl and succinyl groups on target proteins. Modulates the activities of several proteins which are inactive in their acylated form. The sequence is that of NAD-dependent protein deacylase from Vibrio vulnificus (strain CMCP6).